The sequence spans 661 residues: Putative core protein L410 (661 aa).

Residues 1–11 (MADNKGRRDTF) show a composition bias toward basic and acidic residues. The interval 1–26 (MADNKGRRDTFDVSGDTNTNATSNKR) is disordered. The segment covering 15–25 (GDTNTNATSNK) has biased composition (polar residues). Residues 112–140 (KKENKWSDKEYDEFRKELTNLLTGNRALE) are a coiled coil.

Its subcellular location is the virion. In Acanthamoeba polyphaga (Amoeba), this protein is Putative core protein L410.